The chain runs to 195 residues: Calcineurin B homologous protein 1 (195 aa).

Gly-2 carries N-myristoyl glycine lipidation. The Necessary for association with microtubule and interaction with GAPDH motif lies at 2–6 (GSRAS). 4 EF-hand domains span residues 26 to 61 (SQIT…AINP), 71 to 106 (FSEG…NGPE), 110 to 145 (SRSN…MVGV), and 151 to 186 (QLGS…VDVE). Ca(2+) is bound by residues Asp-123, Asp-125, Asp-127, Lys-129, and Glu-134. Residues 138 to 147 (VLRMMVGVNI) carry the Nuclear export signal 1 motif. Residues Asp-164, Asp-166, Asp-168, and Glu-175 each coordinate Ca(2+). A Nuclear export signal 2 motif is present at residues 176–185 (FVKVLEKVDV).

It belongs to the calcineurin regulatory subunit family. CHP subfamily. As to quaternary structure, monomer. Interacts with STK17B; the interaction occurs in a calcium-independent manner and induces the translocation of CHP1 from the Golgi to the nucleus. Interacts with GAPDH; the interaction is direct, occurs in a N-myristoylation-dependent manner and facilitates the ability of CHP1 to bind microtubules. Interacts with KIF1B (via the C-terminal end of the kinesin-motor domain); the interaction occurs in a calcium-dependent manner. Associates (via C-terminal domain) with microtubules; the association occurs with polymerized microtubules during the cell cycle in a myristoylation- and calcium-independent manner and is enhanced by GAPDH. Interacts with PPP3CA. Interacts with SLC9A1/NHE1 (via the cytoplasmic C-terminal domain); the interaction occurs at the plasma membrane in a calcium-dependent manner and at a domain that is critical for growth factor stimulation of the exchanger. Interacts with SLC9A3; increases SLC9A3 trafficking and activity at the plasma membrane. In terms of processing, phosphorylated; decreased phosphorylation is associated with an increase in SLC9A1/NHE1 Na(+)/H(+) exchange activity. Phosphorylation occurs in serum-dependent manner. The phosphorylation state may regulate the binding to SLC9A1/NHE1. Post-translationally, both N-myristoylation and calcium-mediated conformational changes are essential for its function in exocytic traffic. N-myristoylation is required for its association with microtubules and interaction with GAPDH, but not for the constitutive association to membranes.

It is found in the nucleus. The protein resides in the cytoplasm. Its subcellular location is the cytoskeleton. The protein localises to the endomembrane system. It localises to the endoplasmic reticulum-Golgi intermediate compartment. It is found in the endoplasmic reticulum. The protein resides in the cell membrane. Its subcellular location is the membrane. Calcium-binding protein involved in different processes such as regulation of vesicular trafficking, plasma membrane Na(+)/H(+) exchanger and gene transcription. Involved in the constitutive exocytic membrane traffic. Mediates the association between microtubules and membrane-bound organelles of the endoplasmic reticulum and Golgi apparatus and is also required for the targeting and fusion of transcytotic vesicles (TCV) with the plasma membrane. Functions as an integral cofactor in cell pH regulation by controlling plasma membrane-type Na(+)/H(+) exchange activity. Affects the pH sensitivity of SLC9A1/NHE1 by increasing its sensitivity at acidic pH. Required for the stabilization and localization of SLC9A1/NHE1 at the plasma membranes. Inhibits serum- and GTPase-stimulated Na(+)/H(+) exchange. Plays a role as an inhibitor of ribosomal RNA transcription by repressing the nucleolar UBF1 transcriptional activity. May sequester UBF1 in the nucleoplasm and limit its translocation to the nucleolus. Associates to the ribosomal gene promoter. Acts as a negative regulator of the calcineurin/NFAT signaling pathway. Inhibits NFAT nuclear translocation and transcriptional activity by suppressing the calcium-dependent calcineurin phosphatase activity. Also negatively regulates the kinase activity of the apoptosis-induced kinase STK17B. Inhibits both STK17B auto- and substrate-phosphorylations in a calcium-dependent manner. This chain is Calcineurin B homologous protein 1 (Chp1), found in Mus musculus (Mouse).